A 384-amino-acid chain; its full sequence is MVDKKSPLIAVSVGEASGDLLGAHLIRAIRKRCPQARFVGIGGELMKAEGFESLYDQERLAVRGFAEVVRRLPEILRIRRGLVRDLLSLKPDVFVGIDAPDFNLGVAERLKRSGIPTVHYVSPSVWAWRRERVGKIVHQVNRVLCLFPMEPQLYLDAGGRAEFVGHPMAQLMPLEDDRETARKTLGVDAGIPVFALLPGSRVSEIDYMAPVFFQTALLLLERYPAARFLLPAATEATKRRLAEVLQRPEFAGLPLTVIDRQSETVCRAADAVLVTSGTATLEVALCKRPMVISYKISPLTYAYVKRKIKVPHVGLPNILLGKEAVPELLQSEAKPEKLAAALADWYEHPDKVAALQQDFRALHLLLKKDTADLAARAVLEEAGC.

This sequence belongs to the LpxB family.

The catalysed reaction is a lipid X + a UDP-2-N,3-O-bis[(3R)-3-hydroxyacyl]-alpha-D-glucosamine = a lipid A disaccharide + UDP + H(+). The protein operates within bacterial outer membrane biogenesis; LPS lipid A biosynthesis. Its function is as follows. Condensation of UDP-2,3-diacylglucosamine and 2,3-diacylglucosamine-1-phosphate to form lipid A disaccharide, a precursor of lipid A, a phosphorylated glycolipid that anchors the lipopolysaccharide to the outer membrane of the cell. The polypeptide is Lipid-A-disaccharide synthase (Neisseria meningitidis serogroup C / serotype 2a (strain ATCC 700532 / DSM 15464 / FAM18)).